The chain runs to 573 residues: Poly(ribitol-phosphate) beta-N-acetylglucosaminyltransferase TarS (573 aa).

Residues proline 9, aspartate 41, asparagine 68, arginine 76, 92–94, arginine 127, and glutamate 178 contribute to the UDP-N-acetyl-alpha-D-glucosamine site; that span reads DSD. Position 94 (aspartate 94) interacts with Mn(2+). The active-site Proton acceptor is the aspartate 179. UDP-N-acetyl-alpha-D-glucosamine-binding positions include arginine 207 and 211–213; that span reads HMS.

The protein belongs to the glycosyltransferase 2 family. As to quaternary structure, homotrimer. Mn(2+) is required as a cofactor.

It carries out the reaction 4-O-[(D-ribitylphospho)(n)-di{(2R)-glycerylphospho}]-N-acetyl-beta-D-mannosaminyl-(1-&gt;4)-N-acetyl-alpha-D-glucosaminyl di-trans,octa-cis-undecaprenyl diphosphate + n UDP-N-acetyl-alpha-D-glucosamine = 4-O-([2-N-acetyl-beta-D-glucosaminyl-1-D-ribitylphospho](n)-di{[2R]-1-glycerylphospho})-N-acetyl-beta-D-mannosaminyl-(1-&gt;4)-N-acetyl-alpha-D-glucosaminyl di-trans,octa-cis-undecaprenyl diphosphate + n UDP + n H(+). It participates in cell wall biogenesis; poly(ribitol phosphate) teichoic acid biosynthesis. In terms of biological role, attaches beta-O-GlcNAc (beta-O-N-acetyl-D-glucosamine) residues to the C4 position of poly(RboP)-wall teichoic acids (WTAs). Mediates beta-lactam resistance in methicillin resistant Staphylococcus aureus (MRSA) strains. In Staphylococcus aureus (strain Mu50 / ATCC 700699), this protein is Poly(ribitol-phosphate) beta-N-acetylglucosaminyltransferase TarS.